We begin with the raw amino-acid sequence, 932 residues long: Protocadherin gamma-A12 (932 aa).

Residues 1–29 (MIPARLHRDYKGLVLLGILLGTLWETGCT) form the signal peptide. Cadherin domains lie at 30–133 (QIRY…APYF), 134–242 (RESE…APAF), 243–347 (AQPE…APEV), 348–452 (VLTS…PPVF), 453–562 (PQAS…APEI), and 570–683 (DGST…SPAN). The Extracellular segment spans residues 30 to 692 (QIRYSVPEEL…NSETSDLTLY (663 aa)). 3 N-linked (GlcNAc...) asparagine glycosylation sites follow: Asn265, Asn419, and Asn545. Residues 693–713 (LVVAVAAVSCVFLAFVILLLA) traverse the membrane as a helical segment. At 714 to 932 (LRLRRWHKSR…KKKSGKKEKK (219 aa)) the chain is on the cytoplasmic side. 2 disordered regions span residues 803–841 (SHGLIEQAPPNTDWRFSQAQRPGTSGSQNGDDTGTWPNN) and 902–932 (ATLTNAAGKRDGKAPAGGNGNKKKSGKKEKK). A compositionally biased stretch (polar residues) spans 816 to 841 (WRFSQAQRPGTSGSQNGDDTGTWPNN). The segment covering 922 to 932 (NKKKSGKKEKK) has biased composition (basic residues).

It localises to the cell membrane. In terms of biological role, potential calcium-dependent cell-adhesion protein. May be involved in the establishment and maintenance of specific neuronal connections in the brain. The chain is Protocadherin gamma-A12 (PCDHGA12) from Homo sapiens (Human).